The primary structure comprises 103 residues: NADH-quinone oxidoreductase subunit K (103 aa).

3 consecutive transmembrane segments (helical) span residues 6 to 26 (LSHF…GIFL), 32 to 52 (LVLL…FVAF), and 63 to 83 (IFVF…LAIL).

The protein belongs to the complex I subunit 4L family. As to quaternary structure, NDH-1 is composed of 14 different subunits. Subunits NuoA, H, J, K, L, M, N constitute the membrane sector of the complex.

Its subcellular location is the cell inner membrane. The catalysed reaction is a quinone + NADH + 5 H(+)(in) = a quinol + NAD(+) + 4 H(+)(out). NDH-1 shuttles electrons from NADH, via FMN and iron-sulfur (Fe-S) centers, to quinones in the respiratory chain. The immediate electron acceptor for the enzyme in this species is believed to be ubiquinone. Couples the redox reaction to proton translocation (for every two electrons transferred, four hydrogen ions are translocated across the cytoplasmic membrane), and thus conserves the redox energy in a proton gradient. In Dechloromonas aromatica (strain RCB), this protein is NADH-quinone oxidoreductase subunit K.